The primary structure comprises 448 residues: tRNA(Ile)-lysidine synthase (448 aa).

Residue 25-30 coordinates ATP; the sequence is SGGSDS.

It belongs to the tRNA(Ile)-lysidine synthase family.

It localises to the cytoplasm. It catalyses the reaction cytidine(34) in tRNA(Ile2) + L-lysine + ATP = lysidine(34) in tRNA(Ile2) + AMP + diphosphate + H(+). Its function is as follows. Ligates lysine onto the cytidine present at position 34 of the AUA codon-specific tRNA(Ile) that contains the anticodon CAU, in an ATP-dependent manner. Cytidine is converted to lysidine, thus changing the amino acid specificity of the tRNA from methionine to isoleucine. The sequence is that of tRNA(Ile)-lysidine synthase from Brucella suis biovar 1 (strain 1330).